The primary structure comprises 164 residues: Thiol peroxidase (164 aa).

The 146-residue stretch at 18–163 (INEGDFAPDF…FDAALAAYKN (146 aa)) folds into the Thioredoxin domain. The Cysteine sulfenic acid (-SOH) intermediate role is filled by C60. Cysteines 60 and 93 form a disulfide.

This sequence belongs to the peroxiredoxin family. Tpx subfamily. In terms of assembly, homodimer.

The enzyme catalyses a hydroperoxide + [thioredoxin]-dithiol = an alcohol + [thioredoxin]-disulfide + H2O. Its function is as follows. Thiol-specific peroxidase that catalyzes the reduction of hydrogen peroxide and organic hydroperoxides to water and alcohols, respectively. Plays a role in cell protection against oxidative stress by detoxifying peroxides. This chain is Thiol peroxidase, found in Staphylococcus aureus (strain Mu50 / ATCC 700699).